Here is a 360-residue protein sequence, read N- to C-terminus: Peptide chain release factor 1 (360 aa).

Position 237 is an N5-methylglutamine (Q237).

It belongs to the prokaryotic/mitochondrial release factor family. In terms of processing, methylated by PrmC. Methylation increases the termination efficiency of RF1.

The protein localises to the cytoplasm. Peptide chain release factor 1 directs the termination of translation in response to the peptide chain termination codons UAG and UAA. The polypeptide is Peptide chain release factor 1 (Cellvibrio japonicus (strain Ueda107) (Pseudomonas fluorescens subsp. cellulosa)).